A 177-amino-acid chain; its full sequence is Plasmid transfer protein TraF (177 aa).

Residues 1 to 30 (MSRFQRLTKYVAIGGGAALLLAGAAYLAGA) form the signal peptide.

This sequence belongs to the peptidase S26C family.

It localises to the periplasm. Required for donor-specific phage sensitivity. May be involved in pilus assembly. The protein is Plasmid transfer protein TraF (traF) of Escherichia coli.